The sequence spans 118 residues: Basic phospholipase A2 PA-15 (118 aa).

7 disulfide bridges follow: Cys-11-Cys-71, Cys-27-Cys-117, Cys-29-Cys-45, Cys-44-Cys-98, Cys-51-Cys-91, Cys-60-Cys-84, and Cys-78-Cys-89. Ca(2+)-binding residues include Tyr-28, Gly-30, and Gly-32. Residue His-48 is part of the active site. Residue Asp-49 coordinates Ca(2+). Asp-92 is an active-site residue.

It belongs to the phospholipase A2 family. Group I subfamily. D49 sub-subfamily. It depends on Ca(2+) as a cofactor. As to expression, expressed by the venom gland.

It localises to the secreted. It catalyses the reaction a 1,2-diacyl-sn-glycero-3-phosphocholine + H2O = a 1-acyl-sn-glycero-3-phosphocholine + a fatty acid + H(+). PLA2 catalyzes the calcium-dependent hydrolysis of the 2-acyl groups in 3-sn-phosphoglycerides. This is Basic phospholipase A2 PA-15 from Pseudechis australis (Mulga snake).